Consider the following 243-residue polypeptide: Protein GrpE (243 aa).

Belongs to the GrpE family. As to quaternary structure, homodimer.

It is found in the cytoplasm. Participates actively in the response to hyperosmotic and heat shock by preventing the aggregation of stress-denatured proteins, in association with DnaK and GrpE. It is the nucleotide exchange factor for DnaK and may function as a thermosensor. Unfolded proteins bind initially to DnaJ; upon interaction with the DnaJ-bound protein, DnaK hydrolyzes its bound ATP, resulting in the formation of a stable complex. GrpE releases ADP from DnaK; ATP binding to DnaK triggers the release of the substrate protein, thus completing the reaction cycle. Several rounds of ATP-dependent interactions between DnaJ, DnaK and GrpE are required for fully efficient folding. This is Protein GrpE from Mycoplasma mobile (strain ATCC 43663 / 163K / NCTC 11711) (Mesomycoplasma mobile).